Here is a 298-residue protein sequence, read N- to C-terminus: Phosphatidylglycerol--prolipoprotein diacylglyceryl transferase (298 aa).

Transmembrane regions (helical) follow at residues 17–37 (LAVR…IVVG), 59–79 (MMFY…VLFY), and 97–117 (GGMS…LFAW). R142 contacts a 1,2-diacyl-sn-glycero-3-phospho-(1'-sn-glycerol). The next 2 membrane-spanning stretches (helical) occupy residues 230 to 250 (MGAI…TVEF) and 257 to 277 (FLGL…PMIV).

This sequence belongs to the Lgt family.

The protein resides in the cell inner membrane. The catalysed reaction is L-cysteinyl-[prolipoprotein] + a 1,2-diacyl-sn-glycero-3-phospho-(1'-sn-glycerol) = an S-1,2-diacyl-sn-glyceryl-L-cysteinyl-[prolipoprotein] + sn-glycerol 1-phosphate + H(+). It functions in the pathway protein modification; lipoprotein biosynthesis (diacylglyceryl transfer). Its function is as follows. Catalyzes the transfer of the diacylglyceryl group from phosphatidylglycerol to the sulfhydryl group of the N-terminal cysteine of a prolipoprotein, the first step in the formation of mature lipoproteins. This Burkholderia cenocepacia (strain ATCC BAA-245 / DSM 16553 / LMG 16656 / NCTC 13227 / J2315 / CF5610) (Burkholderia cepacia (strain J2315)) protein is Phosphatidylglycerol--prolipoprotein diacylglyceryl transferase.